Consider the following 364-residue polypeptide: C3a anaphylatoxin chemotactic receptor (364 aa).

Topologically, residues 1-50 are extracellular; sequence MGDNMDFSEHYGNFSENYVTESYGEFDLYYDPLNETSLSEQGHRSIWVLS. Asn-13 and Asn-34 each carry an N-linked (GlcNAc...) asparagine glycan. The helical transmembrane segment at 51-71 threads the bilayer; the sequence is IVLCSIACVLGITGNAFVIWI. Topologically, residues 72–82 are cytoplasmic; the sequence is AGVKMKRTVNT. The chain crosses the membrane as a helical span at residues 83–103; sequence IWFVNLAAADLLCCVSIPFSI. The Extracellular segment spans residues 104-120; that stretch reads ADIILNSHWPYGEAMCK. Cysteines 119 and 198 form a disulfide. A helical membrane pass occupies residues 121–141; sequence ILPSMVVLNMFASVFTLVLIS. Topologically, residues 142-159 are cytoplasmic; sequence LDRFALVILPVWAQNHRS. The helical transmembrane segment at 160-180 threads the bilayer; the sequence is ITLAWLLCGLVWVLGLLLSLP. Topologically, residues 181–220 are extracellular; sequence SMIYREIVVHDDMNITLCIYNHLQDKTEGNQSAIKAIHVT. Residues 221–241 form a helical membrane-spanning segment; that stretch reads RLILGFLIPLLVIAVCYLLIG. At 242-256 the chain is on the cytoplasmic side; the sequence is RRVSSGRFKSQRAFQ. A helical transmembrane segment spans residues 257 to 277; it reads IILVVVTTFFVCWLPYHVIGL. The Extracellular portion of the chain corresponds to 278–295; the sequence is VIEYGKEASQVMARALDP. The chain crosses the membrane as a helical span at residues 296-316; sequence LAISLAYVNSCLNPVLYVFMG. Residues 317–364 are Cytoplasmic-facing; the sequence is QDFKERVRVSLRKIFEKVFSEDVTLRSSVYSKGQSQLSRATNSSEAQV.

This sequence belongs to the G-protein coupled receptor 1 family.

It is found in the cell membrane. Receptor for the chemotactic and inflammatory peptide anaphylatoxin C3a. This receptor stimulates chemotaxis, granule enzyme release and superoxide anion production. This is C3a anaphylatoxin chemotactic receptor (c3ar1) from Oncorhynchus mykiss (Rainbow trout).